The sequence spans 335 residues: Glycerol-3-phosphate dehydrogenase [NAD(P)+] (335 aa).

Lys109 contacts NADPH. 3 residues coordinate sn-glycerol 3-phosphate: Lys109, Gly141, and Ser143. Ala145 lines the NADPH pocket. The sn-glycerol 3-phosphate site is built by Lys196, Asp249, Ser259, Arg260, and Asn261. Lys196 acts as the Proton acceptor in catalysis. Arg260 serves as a coordination point for NADPH. Glu283 contributes to the NADPH binding site.

This sequence belongs to the NAD-dependent glycerol-3-phosphate dehydrogenase family.

Its subcellular location is the cytoplasm. The catalysed reaction is sn-glycerol 3-phosphate + NAD(+) = dihydroxyacetone phosphate + NADH + H(+). The enzyme catalyses sn-glycerol 3-phosphate + NADP(+) = dihydroxyacetone phosphate + NADPH + H(+). It functions in the pathway membrane lipid metabolism; glycerophospholipid metabolism. Functionally, catalyzes the reduction of the glycolytic intermediate dihydroxyacetone phosphate (DHAP) to sn-glycerol 3-phosphate (G3P), the key precursor for phospholipid synthesis. The chain is Glycerol-3-phosphate dehydrogenase [NAD(P)+] from Mycoplasma mobile (strain ATCC 43663 / 163K / NCTC 11711) (Mesomycoplasma mobile).